A 402-amino-acid polypeptide reads, in one-letter code: S-adenosylmethionine synthase (402 aa).

An ATP-binding site is contributed by 137–142 (GQGSAD).

Belongs to the AdoMet synthase 2 family. The cofactor is Mg(2+).

The enzyme catalyses L-methionine + ATP + H2O = S-adenosyl-L-methionine + phosphate + diphosphate. The protein operates within amino-acid biosynthesis; S-adenosyl-L-methionine biosynthesis; S-adenosyl-L-methionine from L-methionine: step 1/1. Its function is as follows. Catalyzes the formation of S-adenosylmethionine from methionine and ATP. This Pyrobaculum calidifontis (strain DSM 21063 / JCM 11548 / VA1) protein is S-adenosylmethionine synthase.